A 906-amino-acid polypeptide reads, in one-letter code: Protein kintoun (906 aa).

S376 carries the phosphoserine modification. Disordered stretches follow at residues 614–691 (QQQK…RKQR) and 793–906 (RKKN…DEDM). Basic residues predominate over residues 618 to 631 (KLNKKQRKRNKKQR). Residues 639-655 (EELKAAQEELQLQHEKQ) are compositionally biased toward basic and acidic residues. A compositionally biased stretch (basic residues) spans 793–808 (RKKNQKRRDCKLRAQQ). S812 is subject to Phosphoserine. The segment covering 837 to 850 (ANAQYFKQPNNNNG) has biased composition (polar residues). Composition is skewed to basic and acidic residues over residues 851–865 (HDQDKNKKLSMHDSG) and 875–887 (NNEEETKRNEADA). Positions 894 to 906 (EMDDDDEDEDEDM) are enriched in acidic residues.

The protein belongs to the PIH1 family. Kintoun subfamily. In terms of assembly, interacts with Pp1alpha-96A, Pp1-87B, Pp1-13C and flw.

It is found in the cytoplasm. Required for cytoplasmic pre-assembly of axonemal dyneins, thereby playing a central role in motility in cilia and flagella. Involved in pre-assembly of dynein arm complexes in the cytoplasm before intraflagellar transport loads them for the ciliary compartment. The sequence is that of Protein kintoun from Drosophila virilis (Fruit fly).